A 422-amino-acid polypeptide reads, in one-letter code: GTPase Obg (422 aa).

Residues 1–158 (MFYDRAKIYV…LWLELELKVI (158 aa)) form the Obg domain. Positions 159–330 (ADVGLIGFPN…VIHRVAELLA (172 aa)) constitute an OBG-type G domain. Residues 165–172 (GFPNAGKS), 190–194 (FTTLV), 212–215 (DIPG), 282–285 (NKMD), and 311–313 (SAA) each bind GTP. Positions 172 and 192 each coordinate Mg(2+). In terms of domain architecture, OCT spans 344–422 (VMFEPEERFN…IGDWEFEWSE (79 aa)).

The protein belongs to the TRAFAC class OBG-HflX-like GTPase superfamily. OBG GTPase family. Monomer. The cofactor is Mg(2+).

The protein resides in the cytoplasm. Its function is as follows. An essential GTPase which binds GTP, GDP and possibly (p)ppGpp with moderate affinity, with high nucleotide exchange rates and a fairly low GTP hydrolysis rate. Plays a role in control of the cell cycle, stress response, ribosome biogenesis and in those bacteria that undergo differentiation, in morphogenesis control. The protein is GTPase Obg of Desulforamulus reducens (strain ATCC BAA-1160 / DSM 100696 / MI-1) (Desulfotomaculum reducens).